The primary structure comprises 366 residues: 2-oxoglutarate synthase subunit KorA (366 aa).

Heterotetramer of the KorA, KorB, KorC and KorD subunits.

The enzyme catalyses 2 oxidized [2Fe-2S]-[ferredoxin] + 2-oxoglutarate + CoA = succinyl-CoA + 2 reduced [2Fe-2S]-[ferredoxin] + CO2 + H(+). The sequence is that of 2-oxoglutarate synthase subunit KorA (korA) from Methanocaldococcus jannaschii (strain ATCC 43067 / DSM 2661 / JAL-1 / JCM 10045 / NBRC 100440) (Methanococcus jannaschii).